The chain runs to 83 residues: Small ribosomal subunit protein bS16 (83 aa).

The protein belongs to the bacterial ribosomal protein bS16 family.

The chain is Small ribosomal subunit protein bS16 from Shewanella halifaxensis (strain HAW-EB4).